Consider the following 871-residue polypeptide: Protein translocase subunit SecA (871 aa).

Residues Gln80, 98–102, and Asp537 each bind ATP; that span reads GEGKT. The interval 852 to 871 is disordered; sequence MEKGKKKGGSHGLGKIRVKR. Over residues 855–871 the composition is skewed to basic residues; it reads GKKKGGSHGLGKIRVKR.

This sequence belongs to the SecA family. Monomer and homodimer. Part of the essential Sec protein translocation apparatus which comprises SecA, SecYEG and auxiliary proteins SecDF. Other proteins may also be involved.

The protein localises to the cell inner membrane. It is found in the cytoplasm. It catalyses the reaction ATP + H2O + cellular proteinSide 1 = ADP + phosphate + cellular proteinSide 2.. In terms of biological role, part of the Sec protein translocase complex. Interacts with the SecYEG preprotein conducting channel. Has a central role in coupling the hydrolysis of ATP to the transfer of proteins into and across the cell membrane, serving as an ATP-driven molecular motor driving the stepwise translocation of polypeptide chains across the membrane. This chain is Protein translocase subunit SecA, found in Thermotoga neapolitana (strain ATCC 49049 / DSM 4359 / NBRC 107923 / NS-E).